The following is a 277-amino-acid chain: GPALPP motifs-containing protein 1 (277 aa).

Residues 1–240 (MARDLIGPAL…VWTDTPADRE (240 aa)) form a disordered region. Position 2 is an N-acetylalanine (A2). The short motif at 7 to 12 (GPALPP) is the GPALPP motif 1 element. A Phosphoserine modification is found at S28. The short motif at 32–37 (GPALPP) is the GPALPP motif 2 element. Acidic residues-rich tracts occupy residues 60–69 (GNQESEEDDT) and 81–90 (DDDDDDDDEG). Residues 93–98 (GPALPP) carry the GPALPP motif 3 motif. S106 carries the phosphoserine modification. A compositionally biased stretch (pro residues) spans 108 to 117 (PRPMIGPALP). The GPALPP motif 4 motif lies at 113–118 (GPALPP). A phosphoserine mark is found at S138 and S143. T147 is modified (phosphothreonine). A phosphoserine mark is found at S149 and S150. Positions 172–196 (EFEKRAQRMKEKLTKGDDDSSKPIT) are enriched in basic and acidic residues.

The sequence is that of GPALPP motifs-containing protein 1 (GPALPP1) from Bos taurus (Bovine).